Here is a 150-residue protein sequence, read N- to C-terminus: Probable cyclic pyranopterin monophosphate synthase (150 aa).

Residues 68–70 (YCH) and 104–105 (ME) each bind substrate. Asp-119 is a catalytic residue.

It belongs to the MoaC family. Homohexamer; trimer of dimers.

The enzyme catalyses (8S)-3',8-cyclo-7,8-dihydroguanosine 5'-triphosphate = cyclic pyranopterin phosphate + diphosphate. It participates in cofactor biosynthesis; molybdopterin biosynthesis. Functionally, catalyzes the conversion of (8S)-3',8-cyclo-7,8-dihydroguanosine 5'-triphosphate to cyclic pyranopterin monophosphate (cPMP). This chain is Probable cyclic pyranopterin monophosphate synthase, found in Thermoplasma volcanium (strain ATCC 51530 / DSM 4299 / JCM 9571 / NBRC 15438 / GSS1).